The following is a 284-amino-acid chain: tRNA-cytidine(32) 2-sulfurtransferase (284 aa).

The PP-loop motif signature appears at 45-50; that stretch reads SGGKDS. Cysteine 120, cysteine 123, and cysteine 211 together coordinate [4Fe-4S] cluster.

The protein belongs to the TtcA family. As to quaternary structure, homodimer. Mg(2+) serves as cofactor. It depends on [4Fe-4S] cluster as a cofactor.

It is found in the cytoplasm. It carries out the reaction cytidine(32) in tRNA + S-sulfanyl-L-cysteinyl-[cysteine desulfurase] + AH2 + ATP = 2-thiocytidine(32) in tRNA + L-cysteinyl-[cysteine desulfurase] + A + AMP + diphosphate + H(+). Its pathway is tRNA modification. Catalyzes the ATP-dependent 2-thiolation of cytidine in position 32 of tRNA, to form 2-thiocytidine (s(2)C32). The sulfur atoms are provided by the cysteine/cysteine desulfurase (IscS) system. This is tRNA-cytidine(32) 2-sulfurtransferase from Alcanivorax borkumensis (strain ATCC 700651 / DSM 11573 / NCIMB 13689 / SK2).